A 350-amino-acid chain; its full sequence is Ion-translocating oxidoreductase complex subunit D (350 aa).

5 helical membrane passes run 15-35 (QTQT…LAQT), 36-56 (WFFG…ALGA), 67-87 (PIKP…IGLS), 88-108 (LPPL…IIIA), and 122-142 (PAMV…TSWL). T186 bears the FMN phosphoryl threonine mark. 4 consecutive transmembrane segments (helical) span residues 213-233 (WGGI…LFLL), 242-262 (IPGA…LMTP), 264-284 (ATAT…AFFI), and 299-316 (LVYG…RRFG).

This sequence belongs to the NqrB/RnfD family. In terms of assembly, the complex is composed of six subunits: RnfA, RnfB, RnfC, RnfD, RnfE and RnfG. It depends on FMN as a cofactor.

It localises to the cell inner membrane. Functionally, part of a membrane-bound complex that couples electron transfer with translocation of ions across the membrane. This is Ion-translocating oxidoreductase complex subunit D from Aeromonas salmonicida (strain A449).